The primary structure comprises 146 residues: Keratin-associated protein 12-2 (146 aa).

23 tandem repeats follow at residues 10–14 (CQPAC), 15–19 (CAPSP), 20–24 (CQPAC), 25–29 (CVPSS), 34–38 (CCVPV), 40–44 (CQSSV), 45–49 (CVPVS), 55–59 (CLPVS), 60–64 (CQSSV), 65–69 (CVPMS), 70–74 (FKSAV), 75–79 (CVPVS), 80–84 (CQSSV), 85–89 (CVPVS), 90–94 (CRPIV), 95–99 (CAAPS), 100–104 (CQSSL), 105–109 (CVPVS), 110–114 (CRPVV), 120–124 (CQSSG), 125–129 (CCQPS), 130–134 (CTSVL), and 135–139 (CRPIS). A 23 X 5 AA approximate repeats region spans residues 10-139 (CQPACCAPSP…CTSVLCRPIS (130 aa)).

The protein belongs to the KRTAP type 12 family. As to quaternary structure, interacts with hair keratins. Restricted to a narrow region of the hair fiber cuticle, lying approximately 20 cell layers above the apex of the dermal papilla of the hair root; not detected in any other tissues.

Functionally, in the hair cortex, hair keratin intermediate filaments are embedded in an interfilamentous matrix, consisting of hair keratin-associated proteins (KRTAP), which are essential for the formation of a rigid and resistant hair shaft through their extensive disulfide bond cross-linking with abundant cysteine residues of hair keratins. The matrix proteins include the high-sulfur and high-glycine-tyrosine keratins. The sequence is that of Keratin-associated protein 12-2 (KRTAP12-2) from Homo sapiens (Human).